The primary structure comprises 126 residues: Holo-[acyl-carrier-protein] synthase (126 aa).

Mg(2+) contacts are provided by Asp9 and Glu58.

It belongs to the P-Pant transferase superfamily. AcpS family. Mg(2+) is required as a cofactor.

It localises to the cytoplasm. The enzyme catalyses apo-[ACP] + CoA = holo-[ACP] + adenosine 3',5'-bisphosphate + H(+). Its function is as follows. Transfers the 4'-phosphopantetheine moiety from coenzyme A to a Ser of acyl-carrier-protein. The chain is Holo-[acyl-carrier-protein] synthase from Buchnera aphidicola subsp. Schizaphis graminum (strain Sg).